Consider the following 404-residue polypeptide: Dihydrolipoyllysine-residue acetyltransferase component of pyruvate dehydrogenase complex (404 aa).

Residues 2–78 (PIKILMPALS…PVNSLIAVLS (77 aa)) enclose the Lipoyl-binding domain. Lys43 is subject to N6-lipoyllysine. Residues 128–165 (FASPLAKRLAKIRNIRLESVQGSGPHGRIVKQDILSYS) form the Peripheral subunit-binding (PSBD) domain. Residue His377 is part of the active site.

It belongs to the 2-oxoacid dehydrogenase family. Forms a 24-polypeptide structural core with octahedral symmetry. (R)-lipoate is required as a cofactor.

The enzyme catalyses N(6)-[(R)-dihydrolipoyl]-L-lysyl-[protein] + acetyl-CoA = N(6)-[(R)-S(8)-acetyldihydrolipoyl]-L-lysyl-[protein] + CoA. Its function is as follows. The pyruvate dehydrogenase complex catalyzes the overall conversion of pyruvate to acetyl-CoA and CO(2). It contains multiple copies of three enzymatic components: pyruvate dehydrogenase (E1), dihydrolipoamide acetyltransferase (E2) and lipoamide dehydrogenase (E3). The sequence is that of Dihydrolipoyllysine-residue acetyltransferase component of pyruvate dehydrogenase complex (pdhC) from Rickettsia typhi (strain ATCC VR-144 / Wilmington).